We begin with the raw amino-acid sequence, 605 residues long: Ras guanine nucleotide exchange factor A (605 aa).

The LisH domain maps to 67–99 (DKTAIIQLILQHLSTKGLKQTKQTLEKEARTTT). Residues 198 to 320 (DDEVVKFASL…SLTKMVEKLS (123 aa)) enclose the N-terminal Ras-GEF domain. The region spanning 353–597 (DEEEIARQLT…YRESLKREPK (245 aa)) is the Ras-GEF domain.

In terms of assembly, component of the Sca1 complex composed of at least gefA, gefH, scaA, phr, and the protein phosphatase 2A subunits pppA and pho2B. Interacts directly with gefH.

Its subcellular location is the cell membrane. Ras-bound GDP/GTP exchange factor required for normal activation of adenylyl cyclase. Component of the Sca1 complex, a regulator of cell motility, chemotaxis and signal relay. The Sca1 complex is recruited to the plasma membrane in a chemoattractant- and F-actin-dependent manner and is enriched at the leading edge of chemotaxing cells where it regulates F-actin dynamics and signal relay by controlling the activation of rasC and the downstream target of rapamycin complex 2 (TORC2)-Akt/protein kinase B (PKB) pathway. This chain is Ras guanine nucleotide exchange factor A (gefA), found in Dictyostelium discoideum (Social amoeba).